The chain runs to 365 residues: 25S rRNA (uridine(2843)-N(3))-methyltransferase (365 aa).

Belongs to the class I-like SAM-binding methyltransferase superfamily.

It is found in the cytoplasm. It localises to the nucleus. The enzyme catalyses uridine(2843) in 25S rRNA + S-adenosyl-L-methionine = N(3)-methyluridine(2843) in 25S rRNA + S-adenosyl-L-homocysteine + H(+). S-adenosyl-L-methionine-dependent methyltransferase that specifically methylates the N(3) position of uridine 2843 (m3U2843) in 25S rRNA. This is 25S rRNA (uridine(2843)-N(3))-methyltransferase (BMT6) from Saccharomyces cerevisiae (strain ATCC 204508 / S288c) (Baker's yeast).